A 493-amino-acid polypeptide reads, in one-letter code: Glutamyl-tRNA(Gln) amidotransferase subunit A (493 aa).

Catalysis depends on charge relay system residues Lys-78 and Ser-158. Ser-182 (acyl-ester intermediate) is an active-site residue.

This sequence belongs to the amidase family. GatA subfamily. In terms of assembly, heterotrimer of A, B and C subunits.

The catalysed reaction is L-glutamyl-tRNA(Gln) + L-glutamine + ATP + H2O = L-glutaminyl-tRNA(Gln) + L-glutamate + ADP + phosphate + H(+). Its function is as follows. Allows the formation of correctly charged Gln-tRNA(Gln) through the transamidation of misacylated Glu-tRNA(Gln) in organisms which lack glutaminyl-tRNA synthetase. The reaction takes place in the presence of glutamine and ATP through an activated gamma-phospho-Glu-tRNA(Gln). The protein is Glutamyl-tRNA(Gln) amidotransferase subunit A of Methylorubrum extorquens (strain CM4 / NCIMB 13688) (Methylobacterium extorquens).